A 96-amino-acid polypeptide reads, in one-letter code: Aspartyl/glutamyl-tRNA(Asn/Gln) amidotransferase subunit C (96 aa).

The protein belongs to the GatC family. As to quaternary structure, heterotrimer of A, B and C subunits.

The enzyme catalyses L-glutamyl-tRNA(Gln) + L-glutamine + ATP + H2O = L-glutaminyl-tRNA(Gln) + L-glutamate + ADP + phosphate + H(+). It carries out the reaction L-aspartyl-tRNA(Asn) + L-glutamine + ATP + H2O = L-asparaginyl-tRNA(Asn) + L-glutamate + ADP + phosphate + 2 H(+). Allows the formation of correctly charged Asn-tRNA(Asn) or Gln-tRNA(Gln) through the transamidation of misacylated Asp-tRNA(Asn) or Glu-tRNA(Gln) in organisms which lack either or both of asparaginyl-tRNA or glutaminyl-tRNA synthetases. The reaction takes place in the presence of glutamine and ATP through an activated phospho-Asp-tRNA(Asn) or phospho-Glu-tRNA(Gln). This is Aspartyl/glutamyl-tRNA(Asn/Gln) amidotransferase subunit C from Leptospira borgpetersenii serovar Hardjo-bovis (strain JB197).